Reading from the N-terminus, the 1147-residue chain is GPI inositol-deacylase (1147 aa).

Residues 1 to 94 (MRRHSSGSSE…RTSPSSPLGL (94 aa)) are disordered. N23 carries an N-linked (GlcNAc...) asparagine glycan. Over residues 28-49 (SAKDSRSSAHPTTKLDHNRNAD) the composition is skewed to basic and acidic residues. A compositionally biased stretch (low complexity) spans 50–63 (RPPSFSISRRSSSI). An N-linked (GlcNAc...) asparagine glycan is attached at N74. The chain crosses the membrane as a helical span at residues 127–147 (AITFSALVAAIVGIGFLVAVL). The active site involves S310. A run of 2 helical transmembrane segments spans residues 795 to 815 (LYMR…ALVL) and 843 to 863 (IPLM…MAPA). N-linked (GlcNAc...) asparagine glycans are attached at residues N865 and N873. Transmembrane regions (helical) follow at residues 893-913 (PLFL…CTVF), 918-938 (LTLT…PGWI), and 965-985 (VLLL…VACL). N1011 is a glycosylation site (N-linked (GlcNAc...) asparagine). Helical transmembrane passes span 1015–1035 (SIFI…VVWV), 1052–1072 (VLSV…KMIP), and 1084–1104 (LLLF…AYTL).

This sequence belongs to the GPI inositol-deacylase family.

It is found in the endoplasmic reticulum membrane. Its function is as follows. Involved in inositol deacylation of GPI-anchored proteins which plays important roles in the quality control and ER-associated degradation of GPI-anchored proteins. The chain is GPI inositol-deacylase (BST1) from Chaetomium globosum (strain ATCC 6205 / CBS 148.51 / DSM 1962 / NBRC 6347 / NRRL 1970) (Soil fungus).